A 674-amino-acid chain; its full sequence is Sodium/myo-inositol cotransporter 2 (674 aa).

At 1 to 25 (MESSASSPPLTQSDPLEAFPRRTLE) the chain is on the extracellular side. Residues 26-46 (AGDIAVLVLYFLFVLAVGLWS) form a helical membrane-spanning segment. The Cytoplasmic segment spans residues 47–56 (TVKTKRDTVK). A helical transmembrane segment spans residues 57 to 77 (GYFLAGGNMLWWPVGASLFAS). Topologically, residues 78-102 (NVGSGHFVGLAGSGAAAGLSVTAYE) are extracellular. The helical transmembrane segment at 103–123 (LNGLFFVLMLSWIFLPIYITG) threads the bilayer. Residues 124-140 (QVTTMPEYLRKRFGGNR) are Cytoplasmic-facing. The chain crosses the membrane as a helical span at residues 141–161 (IPIILAVLYLFIYIFTKISVD). Residues 162 to 180 (MYAGAIFIQQSLHVNLYLA) lie on the Extracellular side of the membrane. A helical membrane pass occupies residues 181-201 (IVGLLAVTALYTIAGGLAAVI). Topologically, residues 202–208 (YTDALQT) are cytoplasmic. A helical membrane pass occupies residues 209–229 (LIMLIGALILMGYSFAAVGGL). Topologically, residues 230–272 (EGLEEKYFLAMASNRSGNSSCGLPREDAFHIFRDPVTSDLPWP) are extracellular. The chain crosses the membrane as a helical span at residues 273-293 (GILFGMSIPSLWYWCTDQVIV). Residues 294-308 (QRTLAAKNLSHAKGG) lie on the Cytoplasmic side of the membrane. A helical membrane pass occupies residues 309–329 (SLMAAYLKVLPLFIMVFPGMV). At 330-374 (SRVLFPDEVACADPEICRKVCSNPAGCSDIAYPKLVLELLPTGLR) the chain is on the extracellular side. A helical membrane pass occupies residues 375–397 (GLMMAVMVAALTSSLTSIFNSAS). Residues 398–418 (TIFTMDLWNHLRPRASEKELM) are Cytoplasmic-facing. The helical transmembrane segment at 419 to 439 (IVGRVFVLLLVLVSILWIPVV) threads the bilayer. At 440–446 (QASQGGQ) the chain is on the extracellular side. A helical transmembrane segment spans residues 447 to 467 (LFIYIQSISSYLQPPVAVVFI). The Cytoplasmic portion of the chain corresponds to 468 to 479 (MGCFWKRANEKG). A helical membrane pass occupies residues 480 to 500 (AFFGLVLGLLLGLVRLILDFI). Over 501–521 (YVQPRCDQLDERPAVVKDVHY) the chain is Extracellular. Residues 522-542 (LYFSMILSSVTLITVCAVSWF) form a helical membrane-spanning segment. Residues 543–653 (TEPPSKEMVS…SLEENPLVKT (111 aa)) are Cytoplasmic-facing. The disordered stretch occupies residues 567–589 (EQVPSATPPPLTLSQNGTPEASG). The segment covering 578-589 (TLSQNGTPEASG) has biased composition (polar residues). A helical membrane pass occupies residues 654-674 (LLDLNLIICISCAIFLWGYFA).

Belongs to the sodium:solute symporter (SSF) (TC 2.A.21) family.

It is found in the membrane. The protein localises to the apical cell membrane. The catalysed reaction is myo-inositol(out) + 2 Na(+)(out) = myo-inositol(in) + 2 Na(+)(in). It carries out the reaction 1D-chiro-inositol(out) + 2 Na(+)(out) = 1D-chiro-inositol(in) + 2 Na(+)(in). It catalyses the reaction D-glucose(out) + 2 Na(+)(out) = D-glucose(in) + 2 Na(+)(in). The enzyme catalyses D-xylose(out) + 2 Na(+)(out) = D-xylose(in) + 2 Na(+)(in). MI transport activity inhibited by D-chiro-inositol (DCI), phlorizin (Pz) and sodium (Na(+)). Insulin increases D-chiro-inositol uptake. In terms of biological role, involved in the sodium-dependent cotransport of myo-inositol (MI) with a Na(+):MI stoichiometry of 2:1. Exclusively responsible for apical MI transport and absorption in intestine. Can also transport D-chiro-inositol (DCI) but not L-fucose. Exhibits stereospecific cotransport of both D-glucose and D-xylose. May induce apoptosis through the TNF-alpha, PDCD1 pathway. May play a role in the regulation of MI concentration in serum, involving reabsorption in at least the proximal tubule of the kidney. The sequence is that of Sodium/myo-inositol cotransporter 2 from Bos taurus (Bovine).